The primary structure comprises 189 residues: Probable nicotinate-nucleotide adenylyltransferase (189 aa).

This sequence belongs to the NadD family.

It carries out the reaction nicotinate beta-D-ribonucleotide + ATP + H(+) = deamido-NAD(+) + diphosphate. It participates in cofactor biosynthesis; NAD(+) biosynthesis; deamido-NAD(+) from nicotinate D-ribonucleotide: step 1/1. In terms of biological role, catalyzes the reversible adenylation of nicotinate mononucleotide (NaMN) to nicotinic acid adenine dinucleotide (NaAD). This is Probable nicotinate-nucleotide adenylyltransferase from Bacillus anthracis (strain CDC 684 / NRRL 3495).